The primary structure comprises 412 residues: Palmitoyltransferase ZDHHC11 (412 aa).

The Cytoplasmic segment spans residues Met1 to Gln42. A helical membrane pass occupies residues Val43–Phe63. Residues Leu64 to Lys69 lie on the Lumenal side of the membrane. The helical transmembrane segment at Tyr70–Ala90 threads the bilayer. The Cytoplasmic segment spans residues Ser91–Ser176. A DHHC domain is found at Gln125–Ala175. The active-site S-palmitoyl cysteine intermediate is Cys155. The helical transmembrane segment at Ala177–Val197 threads the bilayer. Residues Asn198–Thr230 are Lumenal-facing. Residues Asn198–Asp412 are mediates interaction with IRF3 and STING1. A helical membrane pass occupies residues Leu231–Leu251. The Cytoplasmic segment spans residues Gly252–Asp412. The segment at His374 to Asp412 is disordered. Residues Ser389–Thr400 show a composition bias toward polar residues. The span at Glu401 to Asp412 shows a compositional bias: basic and acidic residues.

This sequence belongs to the DHHC palmitoyltransferase family. Interacts with IRF3 and STING1; in presence of DNA viruses recruits IRF3 to STING1 promoting IRF3 phosphorylation and activation. Expressed in testis.

It localises to the endoplasmic reticulum membrane. The catalysed reaction is L-cysteinyl-[protein] + hexadecanoyl-CoA = S-hexadecanoyl-L-cysteinyl-[protein] + CoA. Endoplasmic reticulum-localized palmitoyltransferase that could catalyze the addition of palmitate onto various protein substrates and be involved in a variety of cellular processes. Has a palmitoyltransferase activity toward NCDN and regulates NCDN association with endosome membranes through this palmitoylation. May play a role in cell proliferation. In terms of biological role, also has a palmitoyltransferase activity-independent function in DNA virus-triggered and CGAS-mediated innate immune response. Functions as an adapter that recruits IRF3 to STING1 to promote the activation of that key transcriptional regulator of type I interferon (IFN)-dependent immune response. This chain is Palmitoyltransferase ZDHHC11, found in Homo sapiens (Human).